We begin with the raw amino-acid sequence, 39 residues long: Gonadal protein gdl-ORF39 (39 aa).

In terms of tissue distribution, in bundles of maturing sperm of larval, pupal and adult males.

In Drosophila melanogaster (Fruit fly), this protein is Gonadal protein gdl-ORF39 (gdl-ORF39).